We begin with the raw amino-acid sequence, 256 residues long: Expansin-like B1 (256 aa).

The N-terminal stretch at 1 to 24 is a signal peptide; sequence MAQLLRRHLPVILSLILFLSKATA. Asn27 is a glycosylation site (N-linked (GlcNAc...) asparagine). One can recognise an Expansin-like EG45 domain in the interval 46-150; the sequence is NGACEYGAFG…RRVSCTYPNK (105 aa). In terms of domain architecture, Expansin-like CBD spans 164–249; sequence NYLEFEIWYQ…NWTAGATYDS (86 aa). N-linked (GlcNAc...) asparagine glycans are attached at residues Asn189 and Asn240.

The protein belongs to the expansin family. Expansin-like B subfamily.

It localises to the secreted. The polypeptide is Expansin-like B1 (EXLB1) (Oryza sativa subsp. japonica (Rice)).